The chain runs to 636 residues: TNFAIP3-interacting protein 1 (636 aa).

Residues 20–73 (EASAAFERLVKENSRLKEKMQGIKMLGELLEESQMEATRLRQKAEELVKDNELL) are a coiled coil. Over residues 61-71 (QKAEELVKDNE) the composition is skewed to basic and acidic residues. 2 disordered regions span residues 61-151 (QKAE…GPLP) and 252-283 (MSNG…QQQA). S77 carries the post-translational modification Phosphoserine. Residues 94 to 412 (SNVTASPTAP…SPLTRQREYQ (319 aa)) are interaction with Nef. Polar residues predominate over residues 131-142 (EEQNSPESSSHA). Residues 196–258 (SKVHKNEQRT…KLLMSNGNKE (63 aa)) are a coiled coil. Phosphoserine is present on S284. Positions 294–535 (VALGAAEKKV…RKAKASGERY (242 aa)) form a coiled coil. The segment at 351 to 367 (DLEAEREQKQRDFDRKL) is interaction with Shigella flexneri ipah9.8. The residue at position 403 (S403) is a Phosphoserine. Residues 431-588 (TPPSSPPTAF…MEHPPPLPNS (158 aa)) form a required for inhibitory activity of TNF-induced NF-kappa-B activation region. Position 438 is a phosphothreonine (T438). S442 is subject to Phosphoserine. The segment at 452–510 (KQELVTQNELLKQQVKIFEEDFQRERSDRERMNEEKEELKKQVEKLQAQVTLSNAQLKA) is ubiquitin-binding domain (UBD). The short motif at 524 to 530 (QKRKAKA) is the Nuclear localization signal element. Y552 carries the phosphotyrosine modification. R571 carries the asymmetric dimethylarginine modification. R599 is modified (asymmetric dimethylarginine; alternate). An Omega-N-methylarginine; alternate modification is found at R599. A disordered region spans residues 603–636 (GGVRNPNQSSQVMDPPTARPTEPESPKNDREGPQ). Basic and acidic residues predominate over residues 623–636 (TEPESPKNDREGPQ). S627 bears the Phosphoserine mark.

In terms of assembly, interacts with TNFAIP3 and IKBKG (polyubiquitinated); facilitates TNFAIP3-mediated de-ubiquitination of NEMO/IKBKG. Interacts with polyubiquitin. Interacts with MAPK1, SELPLG and PIK3CD. Interacts with IRAK1 (polyubiquitinated). Interacts with MYD88; the interaction is indicative for participation in an activated TLR-signaling complex. Interacts with HIV-1 matrix protein. Interacts with TAX1BP1. (Microbial infection) Interacts with Shigella flexneri ipah9.8; the interaction promotes polyubiquitination of IKBKG. In terms of processing, phosphorylation at Tyr-552 by SRC-family kinases recruits phosphoinositide-3-kinase (PI3K) PIK3CD:p85 heterodimer which results in integrin activation and leukocyte adhesion to activated endothelium during inflammation. Ubiquitous. Strongly expressed in peripheral blood lymphocytes, spleen and skeletal muscle, and is weakly expressed in the brain. In peripheral blood mononucleocytes, isoform 4 is mainly expressed and isoform 1 and isoform 7 are almost not expressed. Expression of isoform 1 and isoform 7 increases in leukemic cells.

Its subcellular location is the cytoplasm. The protein localises to the nucleus. Functionally, inhibits NF-kappa-B activation and TNF-induced NF-kappa-B-dependent gene expression by regulating TAX1BP1 and A20/TNFAIP3-mediated deubiquitination of IKBKG; proposed to link A20/TNFAIP3 to ubiquitinated IKBKG. Involved in regulation of EGF-induced ERK1/ERK2 signaling pathway; blocks MAPK3/MAPK1 nuclear translocation and MAPK1-dependent transcription. Increases cell surface CD4(T4) antigen expression. Involved in the anti-inflammatory response of macrophages and positively regulates TLR-induced activation of CEBPB. Involved in the prevention of autoimmunity; this function implicates binding to polyubiquitin. Involved in leukocyte integrin activation during inflammation; this function is mediated by association with SELPLG and dependent on phosphorylation by SRC-family kinases. Interacts with HIV-1 matrix protein and is packaged into virions and overexpression can inhibit viral replication. May regulate matrix nuclear localization, both nuclear import of PIC (Preintegration complex) and export of GAG polyprotein and viral genomic RNA during virion production. In case of infection, promotes association of IKBKG with Shigella flexneri E3 ubiquitin-protein ligase ipah9.8 p which in turn promotes polyubiquitination of IKBKG leading to its proteasome-dependent degradation and thus is perturbing NF-kappa-B activation during bacterial infection. The polypeptide is TNFAIP3-interacting protein 1 (TNIP1) (Homo sapiens (Human)).